The following is a 78-amino-acid chain: Metallothionein-like protein type 2 (78 aa).

The protein belongs to the metallothionein superfamily. Type 15 family.

Functionally, metallothioneins have a high content of cysteine residues that bind various heavy metals. The sequence is that of Metallothionein-like protein type 2 from Actinidia deliciosa (Kiwi).